Reading from the N-terminus, the 401-residue chain is Nicotinate phosphoribosyltransferase (401 aa).

H221 is modified (phosphohistidine; by autocatalysis).

It belongs to the NAPRTase family. In terms of processing, transiently phosphorylated on a His residue during the reaction cycle. Phosphorylation strongly increases the affinity for substrates and increases the rate of nicotinate D-ribonucleotide production. Dephosphorylation regenerates the low-affinity form of the enzyme, leading to product release.

The catalysed reaction is nicotinate + 5-phospho-alpha-D-ribose 1-diphosphate + ATP + H2O = nicotinate beta-D-ribonucleotide + ADP + phosphate + diphosphate. The protein operates within cofactor biosynthesis; NAD(+) biosynthesis; nicotinate D-ribonucleotide from nicotinate: step 1/1. Functionally, catalyzes the synthesis of beta-nicotinate D-ribonucleotide from nicotinate and 5-phospho-D-ribose 1-phosphate at the expense of ATP. In Pectobacterium carotovorum subsp. carotovorum (strain PC1), this protein is Nicotinate phosphoribosyltransferase.